The following is a 611-amino-acid chain: UvrABC system protein C (611 aa).

The 79-residue stretch at 6-84 (NNPGVYRMFN…IKRLRPRFNV (79 aa)) folds into the GIY-YIG domain. One can recognise a UVR domain in the interval 194–229 (QSVKDHLAAAMQAASADLDFEHAAVYRDRLAALSHV).

It belongs to the UvrC family. As to quaternary structure, interacts with UvrB in an incision complex.

Its subcellular location is the cytoplasm. Its function is as follows. The UvrABC repair system catalyzes the recognition and processing of DNA lesions. UvrC both incises the 5' and 3' sides of the lesion. The N-terminal half is responsible for the 3' incision and the C-terminal half is responsible for the 5' incision. The sequence is that of UvrABC system protein C from Brucella abortus (strain 2308).